The chain runs to 117 residues: Small ribosomal subunit protein uS17 (117 aa).

A disordered region spans residues 97 to 117 (AEGLAAAHAGEPETESAATDA).

This sequence belongs to the universal ribosomal protein uS17 family. As to quaternary structure, part of the 30S ribosomal subunit.

In terms of biological role, one of the primary rRNA binding proteins, it binds specifically to the 5'-end of 16S ribosomal RNA. This chain is Small ribosomal subunit protein uS17, found in Rhodopirellula baltica (strain DSM 10527 / NCIMB 13988 / SH1).